The primary structure comprises 859 residues: Glucans biosynthesis glucosyltransferase H (859 aa).

6 helical membrane passes run 144 to 166 (YILL…GILP), 200 to 222 (LLLF…MGFL), 523 to 545 (VMSY…LLAV), 573 to 595 (VALF…ILIW), 608 to 630 (VTVS…MLFH), and 684 to 706 (SFLW…SVIS).

Belongs to the glycosyltransferase 2 family. OpgH subfamily.

It localises to the cell inner membrane. It functions in the pathway glycan metabolism; osmoregulated periplasmic glucan (OPG) biosynthesis. Involved in the biosynthesis of osmoregulated periplasmic glucans (OPGs). The sequence is that of Glucans biosynthesis glucosyltransferase H from Pseudomonas syringae pv. tomato (strain ATCC BAA-871 / DC3000).